The primary structure comprises 611 residues: Mitochondrial distribution and morphology protein 34 (611 aa).

Residues 1–195 (MAFNFNWSPL…LPAIIHRLSL (195 aa)) enclose the SMP-LTD domain. Positions 325–342 (SAPLSSQDTASVASSQSR) are enriched in polar residues. 4 disordered regions span residues 325–347 (SAPL…GLPS), 361–402 (RHSK…STIT), 415–544 (SIIP…PTYT), and 587–611 (SYVG…AYRH). Positions 361–373 (RHSKAHARKRKKR) are enriched in basic residues. 2 stretches are compositionally biased toward basic and acidic residues: residues 374–385 (VIDLRPHRKPTD) and 444–459 (TLRD…ERTN). A compositionally biased stretch (pro residues) spans 520 to 529 (PLGPPAPAPI).

This sequence belongs to the MDM34 family. In terms of assembly, component of the ER-mitochondria encounter structure (ERMES) or MDM complex, composed of MMM1, MDM10, MDM12 and MDM34.

Its subcellular location is the mitochondrion outer membrane. Component of the ERMES/MDM complex, which serves as a molecular tether to connect the endoplasmic reticulum (ER) and mitochondria. Components of this complex are involved in the control of mitochondrial shape and protein biogenesis, and function in nonvesicular lipid trafficking between the ER and mitochondria. MDM34 is required for the interaction of the ER-resident membrane protein MMM1 and the outer mitochondrial membrane-resident beta-barrel protein MDM10. This Paracoccidioides brasiliensis (strain Pb18) protein is Mitochondrial distribution and morphology protein 34.